We begin with the raw amino-acid sequence, 233 residues long: Antilisterial bacteriocin subtilosin biosynthesis protein AlbG (233 aa).

The next 6 helical transmembrane spans lie at 7–27 (FTLL…VQAV), 46–66 (GLLA…LHYV), 116–136 (TYVM…FEIV), 145–165 (TPPA…LFCM), 176–198 (GSLF…MLSF), and 203–220 (LLFL…SFIY).

It is found in the cell membrane. Functionally, involved in the production of the bacteriocin subtilosin. This is Antilisterial bacteriocin subtilosin biosynthesis protein AlbG (albG) from Bacillus subtilis (strain 168).